The sequence spans 582 residues: Beta-glucosidase 28 (582 aa).

Residues 1 to 21 (MKMHFFILLVITSWLSEKITS) form the signal peptide. Residues Gln48, His151, and 196–197 (NE) each bind a beta-D-glucoside. The Proton donor role is filled by Glu197. The cysteines at positions 216 and 224 are disulfide-linked. Asn255 and Asn330 each carry an N-linked (GlcNAc...) asparagine glycan. Position 340 (Tyr340) interacts with a beta-D-glucoside. N-linked (GlcNAc...) asparagine glycosylation occurs at Asn370. Glu412 is a binding site for a beta-D-glucoside. Glu412 serves as the catalytic Nucleophile. The N-linked (GlcNAc...) asparagine glycan is linked to Asn430. A beta-D-glucoside-binding positions include Trp462, 469 to 470 (EW), and Phe478. Asn521 and Asn544 each carry an N-linked (GlcNAc...) asparagine glycan.

It belongs to the glycosyl hydrolase 1 family.

The enzyme catalyses Hydrolysis of terminal, non-reducing beta-D-glucosyl residues with release of beta-D-glucose.. This is Beta-glucosidase 28 from Arabidopsis thaliana (Mouse-ear cress).